A 186-amino-acid chain; its full sequence is Ribosome-recycling factor (186 aa).

The tract at residues 140-163 (LKKAEKDGDIGQDEGRSLSERVQK) is disordered.

The protein belongs to the RRF family.

The protein resides in the cytoplasm. Its function is as follows. Responsible for the release of ribosomes from messenger RNA at the termination of protein biosynthesis. May increase the efficiency of translation by recycling ribosomes from one round of translation to another. The protein is Ribosome-recycling factor of Rhizobium rhizogenes (strain K84 / ATCC BAA-868) (Agrobacterium radiobacter).